A 386-amino-acid chain; its full sequence is Formate-dependent phosphoribosylglycinamide formyltransferase (386 aa).

N(1)-(5-phospho-beta-D-ribosyl)glycinamide is bound by residues 15-16 (EL) and E75. Residues R107, K148, 153–158 (SSGKGQ), 188–191 (EQFI), and E196 contribute to the ATP site. The ATP-grasp domain occupies 112 to 301 (ALAAQQLNLQ…EFELHLRAIV (190 aa)). Mg(2+) contacts are provided by E260 and E272. N(1)-(5-phospho-beta-D-ribosyl)glycinamide is bound by residues D279, K349, and 356–357 (RR).

The protein belongs to the PurK/PurT family. In terms of assembly, homodimer.

The catalysed reaction is N(1)-(5-phospho-beta-D-ribosyl)glycinamide + formate + ATP = N(2)-formyl-N(1)-(5-phospho-beta-D-ribosyl)glycinamide + ADP + phosphate + H(+). Its pathway is purine metabolism; IMP biosynthesis via de novo pathway; N(2)-formyl-N(1)-(5-phospho-D-ribosyl)glycinamide from N(1)-(5-phospho-D-ribosyl)glycinamide (formate route): step 1/1. In terms of biological role, involved in the de novo purine biosynthesis. Catalyzes the transfer of formate to 5-phospho-ribosyl-glycinamide (GAR), producing 5-phospho-ribosyl-N-formylglycinamide (FGAR). Formate is provided by PurU via hydrolysis of 10-formyl-tetrahydrofolate. This Francisella tularensis subsp. tularensis (strain SCHU S4 / Schu 4) protein is Formate-dependent phosphoribosylglycinamide formyltransferase.